We begin with the raw amino-acid sequence, 95 residues long: MLYTLSRSPTQCDLPALLRLTAAGDDLLLLQDGVLAGLAGSAHLELLLNAPISLYALQDDLEARGLTGHFSHKITVIGYNHFVELTEKHRSQMSW.

It belongs to the DsrH/TusB family. Heterohexamer, formed by a dimer of trimers. The hexameric TusBCD complex contains 2 copies each of TusB, TusC and TusD. The TusBCD complex interacts with TusE.

Its subcellular location is the cytoplasm. Part of a sulfur-relay system required for 2-thiolation of 5-methylaminomethyl-2-thiouridine (mnm(5)s(2)U) at tRNA wobble positions. The sequence is that of Protein TusB from Serratia proteamaculans (strain 568).